We begin with the raw amino-acid sequence, 230 residues long: RING finger protein 141 (230 aa).

The N-myristoyl glycine moiety is linked to residue G2. The segment at 155 to 192 adopts an RING-type zinc-finger fold; the sequence is CCICMDGRADLILPCAHSFCQKCIDKWSDRHRNCPICR.

It is found in the membrane. May be involved in spermatogenesis. This chain is RING finger protein 141 (RNF141), found in Bos taurus (Bovine).